The primary structure comprises 222 residues: N-(5'-phosphoribosyl)anthranilate isomerase (222 aa).

Belongs to the TrpF family.

It carries out the reaction N-(5-phospho-beta-D-ribosyl)anthranilate = 1-(2-carboxyphenylamino)-1-deoxy-D-ribulose 5-phosphate. Its pathway is amino-acid biosynthesis; L-tryptophan biosynthesis; L-tryptophan from chorismate: step 3/5. This chain is N-(5'-phosphoribosyl)anthranilate isomerase, found in Xanthomonas euvesicatoria pv. vesicatoria (strain 85-10) (Xanthomonas campestris pv. vesicatoria).